A 359-amino-acid polypeptide reads, in one-letter code: tRNA-specific 2-thiouridylase MnmA (359 aa).

ATP contacts are provided by residues 7–14 (AMSGGVDS) and Met-33. Catalysis depends on Cys-101, which acts as the Nucleophile. A disulfide bridge links Cys-101 with Cys-198. Gly-125 provides a ligand contact to ATP. The interaction with tRNA stretch occupies residues 148 to 150 (KDQ). Catalysis depends on Cys-198, which acts as the Cysteine persulfide intermediate.

The protein belongs to the MnmA/TRMU family.

It localises to the cytoplasm. The catalysed reaction is S-sulfanyl-L-cysteinyl-[protein] + uridine(34) in tRNA + AH2 + ATP = 2-thiouridine(34) in tRNA + L-cysteinyl-[protein] + A + AMP + diphosphate + H(+). Its function is as follows. Catalyzes the 2-thiolation of uridine at the wobble position (U34) of tRNA, leading to the formation of s(2)U34. This Chloroflexus aggregans (strain MD-66 / DSM 9485) protein is tRNA-specific 2-thiouridylase MnmA.